The following is a 125-amino-acid chain: ADGGTHDARIALMKKIGGATGALGAIAKGEKPYDAEIVKASLTTIAETAKAFPDQFNPKDSTDAEVNPKIWDNLDDFKAKAAKLSTDAETALAQLPADQAGVGNTLKTLGGNCGACHQAYRIKKD.

4 residues coordinate heme: methionine 13, cysteine 113, cysteine 116, and histidine 117. Heme c is bound by residues methionine 13, cysteine 113, cysteine 116, and histidine 117.

As to quaternary structure, monomer. In terms of processing, binds 1 heme c group covalently per subunit.

In terms of biological role, low-spin monoheme cytochrome c. The protein is Cytochrome c-556 of Agrobacterium tumefaciens (strain apple 185).